The following is a 422-amino-acid chain: Phthiocerol/phthiodiolone dimycocerosyl transferase (422 aa).

Catalysis depends on H124, which acts as the Proton acceptor.

Belongs to the acyltransferase PapA5 family. As to quaternary structure, monomer. Interacts directly with the acyl carrier protein (ACP) domain of the mycocerosic acid synthase (mas) protein.

It carries out the reaction 2 a mycocerosyl-[mycocerosic acid synthase] + a phthiocerol = a dimycocerosyl phthiocerol + 2 holo-[mycocerosic acid synthase].. It catalyses the reaction 2 a mycocerosyl-[mycocerosic acid synthase] + a phthiodiolone = a dimycocerosyl phthiodiolone + 2 holo-[mycocerosic acid synthase].. The enzyme catalyses 2 a mycocerosyl-[mycocerosic acid synthase] + a phenolphthiocerol = a dimycocerosyl phenolphthiocerol + 2 holo-[mycocerosic acid synthase].. Functionally, catalyzes diesterification of phthiocerol, phthiodiolone, and phenolphthiocerol with mycocerosic acids, the final step in the phthiocerol, phthiodiolone and phenolphthiocerol dimycocerosate esters (PDIM) synthesis. Can directly transfer the mycocerosate bound to the mycocerosic acid synthase (mas) onto the substrate alcohols. The protein is Phthiocerol/phthiodiolone dimycocerosyl transferase (papA5) of Mycobacterium tuberculosis (strain ATCC 25177 / H37Ra).